Reading from the N-terminus, the 513-residue chain is MQLNASEISDLIKQRIGKFDLGVESRSEGTIVSLTDGIVRIHGLQDVMQGEMVEFPGNTYGMALNLERDSVGAVVLGSYEHLSEGDTAKCTGRILEVPVGEALLGRVVDALGNPIDGAGPIDAKLFSPIEKIAPGVISRQSVSQPLQTGLKAIDSMIPVGRGQRELIIGDRQTGKTAIAIDAIINQKGTGVKCIYVAVGQKQSSIANVVRKLQEHGAMEHTIVVSASASESAALQFIAPYAGCAMGEYFRDRGEDALIVYDDLTKQAWAYRQISLLLRRPPGREAYPGDVFYLHSRLLERASRINAEEVERLTKGEVKGKTGSLTALPIIETQAGDVSAFVPTNVISITDGQIFLETNLFNAGIRPAVNAGLSVSRVGGAAQTKVIKKLGGGIRLDLAQYRELAAFAQFASDLDEATRKQIERGQRVTELMKQNQYSPMSIAQMAVSLFAANEGYLDDIEVSKVRDFEDALQEYMKSQCAELLKSIDATGDYNDAIQAGLHEAIKKFKATHAW.

Residue 169–176 participates in ATP binding; the sequence is GDRQTGKT.

This sequence belongs to the ATPase alpha/beta chains family. In terms of assembly, F-type ATPases have 2 components, CF(1) - the catalytic core - and CF(0) - the membrane proton channel. CF(1) has five subunits: alpha(3), beta(3), gamma(1), delta(1), epsilon(1). CF(0) has three main subunits: a(1), b(2) and c(9-12). The alpha and beta chains form an alternating ring which encloses part of the gamma chain. CF(1) is attached to CF(0) by a central stalk formed by the gamma and epsilon chains, while a peripheral stalk is formed by the delta and b chains.

It is found in the cell inner membrane. The catalysed reaction is ATP + H2O + 4 H(+)(in) = ADP + phosphate + 5 H(+)(out). Produces ATP from ADP in the presence of a proton gradient across the membrane. The alpha chain is a regulatory subunit. The sequence is that of ATP synthase subunit alpha 1 from Methylococcus capsulatus (strain ATCC 33009 / NCIMB 11132 / Bath).